We begin with the raw amino-acid sequence, 333 residues long: HTH-type transcriptional repressor PurR (333 aa).

The region spanning 2–56 (ATIKDVAKLASVSTTTVSHVINKTRFVAEATQKRVWEAVEELNYAPSAVARSLKC) is the HTH lacI-type domain. The H-T-H motif DNA-binding region spans 4–23 (IKDVAKLASVSTTTVSHVIN). The DNA-binding element occupies 48–56 (SAVARSLKC). The hypoxanthine site is built by Phe-73, Lys-189, Thr-191, Phe-220, and Asp-274.

Homodimer.

Its pathway is purine metabolism; purine nucleotide biosynthesis [regulation]. Is the main repressor of the genes involved in the de novo synthesis of purine nucleotides, regulating purB, purC, purEK, purF, purHD, purL, purMN and guaBA expression. PurR is allosterically activated to bind its cognate DNA by binding the purine corepressors, hypoxanthine or guanine, thereby effecting transcription repression. This Aliivibrio salmonicida (strain LFI1238) (Vibrio salmonicida (strain LFI1238)) protein is HTH-type transcriptional repressor PurR.